Consider the following 138-residue polypeptide: Membrane glycoprotein UL139 (138 aa).

The signal sequence occupies residues 1–15; the sequence is MLWILVLFALAASAS. The tract at residues 17-37 is disordered; it reads TTTGTSSNSSQSTSAGTTNTT. A helical membrane pass occupies residues 64–84; that stretch reads GWTLSGLLLIFTCCLCCFWLV. The segment covering 113 to 129 has biased composition (polar residues); sequence SDATLPMGTTGSYTPPQ. Positions 113–138 are disordered; it reads SDATLPMGTTGSYTPPQDGSFPPPPR.

The protein resides in the host membrane. The chain is Membrane glycoprotein UL139 (UL139) from Homo sapiens (Human).